The sequence spans 90 residues: Protein E7 (90 aa).

Positions M1 to E41 are E7 terminal domain. The short motif at L22–E26 is the LXCXE motif; interaction with host RB1 and TMEM173/STING element. Residues C53 to C89 fold into a zinc finger. The Nuclear export signal motif lies at I71–L79.

The protein belongs to the papillomaviridae E7 protein family. As to quaternary structure, homodimer. Homooligomer. Interacts with host RB1; this interaction induces dissociation of RB1-E2F1 complex thereby disrupting RB1 activity. Interacts with host EP300; this interaction represses EP300 transcriptional activity. Interacts with protein E2; this interaction inhibits E7 oncogenic activity. Interacts with host TMEM173/STING; this interaction impairs the ability of TMEM173/STING to sense cytosolic DNA and promote the production of type I interferon (IFN-alpha and IFN-beta). Post-translationally, highly phosphorylated.

The protein resides in the host cytoplasm. It localises to the host nucleus. Plays a role in viral genome replication by driving entry of quiescent cells into the cell cycle. Stimulation of progression from G1 to S phase allows the virus to efficiently use the cellular DNA replicating machinery to achieve viral genome replication. E7 protein has both transforming and trans-activating activities. Induces the disassembly of the E2F1 transcription factor from RB1, with subsequent transcriptional activation of E2F1-regulated S-phase genes. Interferes with host histone deacetylation mediated by HDAC1 and HDAC2, leading to transcription activation. Also plays a role in the inhibition of both antiviral and antiproliferative functions of host interferon alpha. Interaction with host TMEM173/STING impairs the ability of TMEM173/STING to sense cytosolic DNA and promote the production of type I interferon (IFN-alpha and IFN-beta). This Homo sapiens (Human) protein is Protein E7.